The primary structure comprises 103 residues: Large ribosomal subunit protein uL23 (103 aa).

This sequence belongs to the universal ribosomal protein uL23 family. In terms of assembly, part of the 50S ribosomal subunit. Contacts protein L29, and trigger factor when it is bound to the ribosome.

Functionally, one of the early assembly proteins it binds 23S rRNA. One of the proteins that surrounds the polypeptide exit tunnel on the outside of the ribosome. Forms the main docking site for trigger factor binding to the ribosome. The protein is Large ribosomal subunit protein uL23 of Chlorobium phaeobacteroides (strain DSM 266 / SMG 266 / 2430).